The sequence spans 338 residues: UPF0324 membrane protein NMA0465 (338 aa).

Transmembrane regions (helical) follow at residues 5-23, 33-55, 62-84, 94-116, 123-145, 155-177, 222-239, 254-273, 280-302, and 312-334; these read PFYF…ANYL, HISA…YPQF, GVLF…RLTF, AVVT…GIRY, LVYL…AESV, VAIA…FYTW, IRVM…WLLT, IPWF…FDLL, LFVE…TTHA, and PFVL…NYGI.

The protein belongs to the UPF0324 family.

The protein resides in the cell membrane. The chain is UPF0324 membrane protein NMA0465 from Neisseria meningitidis serogroup A / serotype 4A (strain DSM 15465 / Z2491).